The primary structure comprises 352 residues: Nicotinate-nucleotide--dimethylbenzimidazole phosphoribosyltransferase (352 aa).

The active-site Proton acceptor is glutamate 318.

The protein belongs to the CobT family.

The catalysed reaction is 5,6-dimethylbenzimidazole + nicotinate beta-D-ribonucleotide = alpha-ribazole 5'-phosphate + nicotinate + H(+). The protein operates within nucleoside biosynthesis; alpha-ribazole biosynthesis; alpha-ribazole from 5,6-dimethylbenzimidazole: step 1/2. Catalyzes the synthesis of alpha-ribazole-5'-phosphate from nicotinate mononucleotide (NAMN) and 5,6-dimethylbenzimidazole (DMB). The chain is Nicotinate-nucleotide--dimethylbenzimidazole phosphoribosyltransferase from Geotalea uraniireducens (strain Rf4) (Geobacter uraniireducens).